The chain runs to 262 residues: Tryptophan synthase alpha chain (262 aa).

Catalysis depends on proton acceptor residues Glu48 and Asp59.

Belongs to the TrpA family. As to quaternary structure, tetramer of two alpha and two beta chains.

It catalyses the reaction (1S,2R)-1-C-(indol-3-yl)glycerol 3-phosphate + L-serine = D-glyceraldehyde 3-phosphate + L-tryptophan + H2O. It functions in the pathway amino-acid biosynthesis; L-tryptophan biosynthesis; L-tryptophan from chorismate: step 5/5. The alpha subunit is responsible for the aldol cleavage of indoleglycerol phosphate to indole and glyceraldehyde 3-phosphate. This chain is Tryptophan synthase alpha chain, found in Helicobacter pylori (strain ATCC 700392 / 26695) (Campylobacter pylori).